The following is a 49-amino-acid chain: MEKAEKGNPKGKAFRGNKLAFGEYGIQALDRAWITQQQIEAVRVALVRS.

Belongs to the universal ribosomal protein uL16 family. As to quaternary structure, part of the 50S ribosomal subunit.

Binds 23S rRNA and is also seen to make contacts with the A and possibly P site tRNAs. This chain is Large ribosomal subunit protein uL16 (rplP), found in Aquifex pyrophilus.